A 608-amino-acid chain; its full sequence is Afamin (608 aa).

The N-terminal stretch at 1-21 is a signal peptide; sequence MRHLKLTGFIFFLLSLTESLA. Albumin domains follow at residues 22 to 210, 211 to 403, and 404 to 599; these read LPTK…APIT, QYLK…KFNE, and TTER…KTGD. The N-linked (GlcNAc...) asparagine glycan is linked to asparagine 33. Intrachain disulfides connect cysteine 77-cysteine 86, cysteine 99-cysteine 114, cysteine 113-cysteine 124, cysteine 148-cysteine 193, cysteine 224-cysteine 270, cysteine 269-cysteine 277, cysteine 289-cysteine 303, cysteine 302-cysteine 313, cysteine 340-cysteine 385, and cysteine 384-cysteine 393. The N-linked (GlcNAc...) asparagine glycan is linked to asparagine 109. Asparagine 153 carries an N-linked (GlcNAc...) asparagine glycan. The binding pocket for hydrophobic ligands stretch occupies residues 215 to 319; that stretch reads ALSSYQRNVC…RADCIINANK (105 aa). N-linked (GlcNAc...) asparagine glycosylation is present at asparagine 402. Cystine bridges form between cysteine 416–cysteine 462, cysteine 461–cysteine 470, cysteine 483–cysteine 499, cysteine 498–cysteine 509, and cysteine 580–cysteine 589. Asparagine 488 carries N-linked (GlcNAc...) asparagine glycosylation. The disordered stretch occupies residues 585–608; the sequence is KPEACFSPESSKTGDVSQDAEKQR.

It belongs to the ALB/AFP/VDB family. Forms a 1:1 complex with Wnt family members; interacts with WNT1, WNT2B, WNT3, WNT3A, WNT5A, WNT7A, WNT7B, WNT8, WNT9A, WNT9B, WNT10A and WNT10B. In terms of processing, N-glycosylated; more than 90% of the glycans are sialylated.

It localises to the secreted. Its function is as follows. Functions as a carrier for hydrophobic molecules in body fluids. Essential for the solubility and activity of lipidated Wnt family members, including WNT1, WNT2B, WNT3, WNT3A, WNT5A, WNT7A, WNT7B, WNT8, WNT9A, WNT9B, WNT10A and WNT10B. Binds vitamin E. May transport vitamin E in body fluids under conditions where the lipoprotein system is not sufficient. May be involved in the transport of vitamin E across the blood-brain barrier. The sequence is that of Afamin (Afm) from Rattus norvegicus (Rat).